The chain runs to 182 residues: MEIKFTIKQVVAVGIGAALFVVIGMINIPTPVPNTSIQLQYAVQALLSIIFGPIIGLLVGLIGHAIKDSLVGYGLWWTWIIASGLFGLVVGLFRKYVRVINGVFDWKDILIFNLIQLLANALVWGVLAPLGDVVIYQEAAEKVFAQGIVAGIANGVSVAIAGTLLLLAYAGTQTRAGSLKKD.

5 helical membrane passes run 10–30, 46–66, 73–93, 109–129, and 148–168; these read VVAV…NIPT, LLSI…GHAI, YGLW…VGLF, ILIF…VLAP, and IVAG…LLLA.

The protein belongs to the UPF0397 family.

It is found in the cell membrane. The polypeptide is UPF0397 protein SPT_0523 (Streptococcus pneumoniae (strain Taiwan19F-14)).